The chain runs to 466 residues: Cytochrome b561 and DOMON domain-containing protein At3g59070 (466 aa).

Positions 1 to 25 (MSLSSRATLVVLCCLFMLIPSFTTA) are cleaved as a signal peptide. A DOMON domain is found at 57-172 (LNSYLHFNYA…TVVNHLWQDG (116 aa)). Positions 179 to 380 (RLGMHAMSGD…MEILQFKKRW (202 aa)) constitute a Cytochrome b561 domain. 3 helical membrane-spanning segments follow: residues 219–239 (IHAIVNALSWGILMPIGVMAA), 252–272 (WFYIHVVCQTTGYFSGLIGGL), and 287–307 (TLHTVIGLLLFALGFLQILSL). Heme b is bound by residues H220, H256, H289, and H325. The next 2 helical transmembrane spans lie at 327-347 (TMGYIVIVLSIYNIYKGLSIL) and 355-375 (IAYTTIICCIAAFAVVMEILQ).

Requires heme b as cofactor.

Its subcellular location is the membrane. In terms of biological role, may act as a catecholamine-responsive trans-membrane electron transporter. This Arabidopsis thaliana (Mouse-ear cress) protein is Cytochrome b561 and DOMON domain-containing protein At3g59070.